We begin with the raw amino-acid sequence, 71 residues long: Translation initiation factor IF-1 (71 aa).

One can recognise an S1-like domain in the interval 1–71; the sequence is MSKQEMLSFS…LTKGRITFRG (71 aa).

It belongs to the IF-1 family. Component of the 30S ribosomal translation pre-initiation complex which assembles on the 30S ribosome in the order IF-2 and IF-3, IF-1 and N-formylmethionyl-tRNA(fMet); mRNA recruitment can occur at any time during PIC assembly.

The protein resides in the cytoplasm. Its function is as follows. One of the essential components for the initiation of protein synthesis. Stabilizes the binding of IF-2 and IF-3 on the 30S subunit to which N-formylmethionyl-tRNA(fMet) subsequently binds. Helps modulate mRNA selection, yielding the 30S pre-initiation complex (PIC). Upon addition of the 50S ribosomal subunit IF-1, IF-2 and IF-3 are released leaving the mature 70S translation initiation complex. In Pelagibacter ubique (strain HTCC1062), this protein is Translation initiation factor IF-1.